Here is a 157-residue protein sequence, read N- to C-terminus: Catabolic 3-dehydroquinase (157 aa).

Catalysis depends on Tyr27, which acts as the Proton acceptor. Substrate is bound by residues Asn80, His86, and Asp93. His106 functions as the Proton donor in the catalytic mechanism. Substrate is bound by residues 107-108 (VS) and Arg117.

The protein belongs to the type-II 3-dehydroquinase family. In terms of assembly, homododecamer. Adopts a ring-like structure, composed of an arrangement of two hexameric rings stacked on top of one another.

The enzyme catalyses 3-dehydroquinate = 3-dehydroshikimate + H2O. It functions in the pathway aromatic compound metabolism; 3,4-dihydroxybenzoate biosynthesis; 3,4-dihydroxybenzoate from 3-dehydroquinate: step 1/2. Its function is as follows. Is involved in the catabolism of quinate. Allows the utilization of quinate as carbon source via the beta-ketoadipate pathway. This is Catabolic 3-dehydroquinase from Pyricularia oryzae (strain 70-15 / ATCC MYA-4617 / FGSC 8958) (Rice blast fungus).